A 165-amino-acid chain; its full sequence is Transcriptional repressor NrdR (165 aa).

The segment at 3 to 34 (CPFCRNPDSRVVDSRMADDGSAIRRRRQCPEC) is a zinc-finger region. The region spanning 46–136 (LTVIKRSGVG…VYQAFESLED (91 aa)) is the ATP-cone domain.

This sequence belongs to the NrdR family. It depends on Zn(2+) as a cofactor.

In terms of biological role, negatively regulates transcription of bacterial ribonucleotide reductase nrd genes and operons by binding to NrdR-boxes. In Arthrobacter sp. (strain FB24), this protein is Transcriptional repressor NrdR.